The sequence spans 560 residues: Dihydroxy-acid dehydratase (560 aa).

Position 52 (C52) interacts with [2Fe-2S] cluster. Position 84 (D84) interacts with Mg(2+). C125 serves as a coordination point for [2Fe-2S] cluster. 2 residues coordinate Mg(2+): D126 and K127. Position 127 is an N6-carboxylysine (K127). C197 provides a ligand contact to [2Fe-2S] cluster. E448 serves as a coordination point for Mg(2+). S474 acts as the Proton acceptor in catalysis.

Belongs to the IlvD/Edd family. In terms of assembly, homodimer. [2Fe-2S] cluster serves as cofactor. It depends on Mg(2+) as a cofactor.

The enzyme catalyses (2R)-2,3-dihydroxy-3-methylbutanoate = 3-methyl-2-oxobutanoate + H2O. The catalysed reaction is (2R,3R)-2,3-dihydroxy-3-methylpentanoate = (S)-3-methyl-2-oxopentanoate + H2O. It participates in amino-acid biosynthesis; L-isoleucine biosynthesis; L-isoleucine from 2-oxobutanoate: step 3/4. The protein operates within amino-acid biosynthesis; L-valine biosynthesis; L-valine from pyruvate: step 3/4. In terms of biological role, functions in the biosynthesis of branched-chain amino acids. Catalyzes the dehydration of (2R,3R)-2,3-dihydroxy-3-methylpentanoate (2,3-dihydroxy-3-methylvalerate) into 2-oxo-3-methylpentanoate (2-oxo-3-methylvalerate) and of (2R)-2,3-dihydroxy-3-methylbutanoate (2,3-dihydroxyisovalerate) into 2-oxo-3-methylbutanoate (2-oxoisovalerate), the penultimate precursor to L-isoleucine and L-valine, respectively. This is Dihydroxy-acid dehydratase from Leptospira borgpetersenii serovar Hardjo-bovis (strain JB197).